Here is a 357-residue protein sequence, read N- to C-terminus: Chaperone protein DnaJ (357 aa).

The region spanning 4–69 (DYYAILGVDR…QKRKQYDETG (66 aa)) is the J domain. The CR-type zinc finger occupies 132-213 (GASKNVKYRR…CHGTGTVSKN (82 aa)). Positions 145, 148, 161, 164, 187, 190, 201, and 204 each coordinate Zn(2+). CXXCXGXG motif repeat units follow at residues 145 to 152 (CEHCSGTG), 161 to 168 (CPTCHGSG), 187 to 194 (CRTCHGRG), and 201 to 208 (CTVCHGTG).

The protein belongs to the DnaJ family. As to quaternary structure, homodimer. Requires Zn(2+) as cofactor.

It is found in the cytoplasm. Functionally, participates actively in the response to hyperosmotic and heat shock by preventing the aggregation of stress-denatured proteins and by disaggregating proteins, also in an autonomous, DnaK-independent fashion. Unfolded proteins bind initially to DnaJ; upon interaction with the DnaJ-bound protein, DnaK hydrolyzes its bound ATP, resulting in the formation of a stable complex. GrpE releases ADP from DnaK; ATP binding to DnaK triggers the release of the substrate protein, thus completing the reaction cycle. Several rounds of ATP-dependent interactions between DnaJ, DnaK and GrpE are required for fully efficient folding. Also involved, together with DnaK and GrpE, in the DNA replication of plasmids through activation of initiation proteins. This is Chaperone protein DnaJ from Picrophilus torridus (strain ATCC 700027 / DSM 9790 / JCM 10055 / NBRC 100828 / KAW 2/3).